A 181-amino-acid chain; its full sequence is Large ribosomal subunit protein uL16 (181 aa).

It belongs to the universal ribosomal protein uL16 family.

This is Large ribosomal subunit protein uL16 from Pyrococcus abyssi (strain GE5 / Orsay).